The chain runs to 271 residues: Large ribosomal subunit protein eL8 (271 aa).

The protein belongs to the eukaryotic ribosomal protein eL8 family.

This Drosophila melanogaster (Fruit fly) protein is Large ribosomal subunit protein eL8 (RpL7A).